An 87-amino-acid polypeptide reads, in one-letter code: Cell division protein FtsL (87 aa).

At 1–3 (MSR) the chain is on the cytoplasmic side. The helical transmembrane segment at 4–23 (LLLIVLLACSIASAIGVVYM) threads the bilayer. The Periplasmic portion of the chain corresponds to 24–87 (RHMHRKLFVQ…ETSDIVVIRP (64 aa)).

Belongs to the FtsL family. As to quaternary structure, part of a complex composed of FtsB, FtsL and FtsQ.

The protein resides in the cell inner membrane. Essential cell division protein. May link together the upstream cell division proteins, which are predominantly cytoplasmic, with the downstream cell division proteins, which are predominantly periplasmic. In Xanthomonas campestris pv. campestris (strain ATCC 33913 / DSM 3586 / NCPPB 528 / LMG 568 / P 25), this protein is Cell division protein FtsL.